We begin with the raw amino-acid sequence, 326 residues long: ATP synthase gamma chain (326 aa).

Belongs to the ATPase gamma chain family. As to quaternary structure, F-type ATPases have 2 components, CF(1) - the catalytic core - and CF(0) - the membrane proton channel. CF(1) has five subunits: alpha(3), beta(3), gamma(1), delta(1), epsilon(1). CF(0) has three main subunits: a, b and c.

The protein localises to the cell membrane. Its function is as follows. Produces ATP from ADP in the presence of a proton gradient across the membrane. The gamma chain is believed to be important in regulating ATPase activity and the flow of protons through the CF(0) complex. This is ATP synthase gamma chain from Rhodococcus opacus (strain B4).